The following is a 384-amino-acid chain: Methylthioribose-1-phosphate isomerase (384 aa).

The active-site Proton donor is Asp-255.

This sequence belongs to the eIF-2B alpha/beta/delta subunits family. MtnA subfamily.

The protein resides in the cytoplasm. It localises to the nucleus. The enzyme catalyses 5-(methylsulfanyl)-alpha-D-ribose 1-phosphate = 5-(methylsulfanyl)-D-ribulose 1-phosphate. Its pathway is amino-acid biosynthesis; L-methionine biosynthesis via salvage pathway; L-methionine from S-methyl-5-thio-alpha-D-ribose 1-phosphate: step 1/6. Functionally, catalyzes the interconversion of methylthioribose-1-phosphate (MTR-1-P) into methylthioribulose-1-phosphate (MTRu-1-P). The sequence is that of Methylthioribose-1-phosphate isomerase (mri1) from Talaromyces stipitatus (strain ATCC 10500 / CBS 375.48 / QM 6759 / NRRL 1006) (Penicillium stipitatum).